A 172-amino-acid chain; its full sequence is Adenine phosphoribosyltransferase (172 aa).

It belongs to the purine/pyrimidine phosphoribosyltransferase family. In terms of assembly, homodimer.

It localises to the cytoplasm. The catalysed reaction is AMP + diphosphate = 5-phospho-alpha-D-ribose 1-diphosphate + adenine. It participates in purine metabolism; AMP biosynthesis via salvage pathway; AMP from adenine: step 1/1. Functionally, catalyzes a salvage reaction resulting in the formation of AMP, that is energically less costly than de novo synthesis. The polypeptide is Adenine phosphoribosyltransferase (Prochlorococcus marinus (strain MIT 9215)).